A 61-amino-acid chain; its full sequence is Sec-independent protein translocase protein TatA (61 aa).

Residues Met1–Gly21 traverse the membrane as a helical segment.

This sequence belongs to the TatA/E family. In terms of assembly, the Tat system comprises two distinct complexes: a TatABC complex, containing multiple copies of TatA, TatB and TatC subunits, and a separate TatA complex, containing only TatA subunits. Substrates initially bind to the TatABC complex, which probably triggers association of the separate TatA complex to form the active translocon.

Its subcellular location is the cell inner membrane. Part of the twin-arginine translocation (Tat) system that transports large folded proteins containing a characteristic twin-arginine motif in their signal peptide across membranes. TatA could form the protein-conducting channel of the Tat system. The chain is Sec-independent protein translocase protein TatA from Geobacter metallireducens (strain ATCC 53774 / DSM 7210 / GS-15).